The following is a 213-amino-acid chain: High frequency lysogenization protein HflD homolog (213 aa).

Positions 79-122 (QGLNAELTRYTLSLMVLERKLSSAKGALNTLGDRINGLQRQLDH) form a coiled coil.

The protein belongs to the HflD family.

Its subcellular location is the cytoplasm. It localises to the cell inner membrane. This Salmonella typhi protein is High frequency lysogenization protein HflD homolog.